The primary structure comprises 91 residues: Envelope glycoprotein N (91 aa).

Residues 1 to 23 (MGPPRRVCRAGLLFVLLVALAAG) form the signal peptide. The interval 23 to 48 (GDAGPRGEPPGEEGGRDGIGGARCET) is disordered. Residues 24–55 (DAGPRGEPPGEEGGRDGIGGARCETQNTGQMS) are Virion surface-facing. The helical transmembrane segment at 56–76 (APGALVPFYVGMASMGVCIIA) threads the bilayer. Over 77–91 (HVCQICQRLLAAGHA) the chain is Intravirion.

This sequence belongs to the herpesviridae glycoprotein N family. In terms of assembly, interacts (via N-terminus) with gM (via N-terminus). The gM-gN heterodimer forms the gCII complex.

Its subcellular location is the virion membrane. It localises to the host membrane. The protein localises to the host Golgi apparatus. The protein resides in the host trans-Golgi network. Envelope glycoprotein necessary for proper maturation of gM and modulation of its membrane fusion activity. Also plays a critical role in virion morphogenesis. This Homo sapiens (Human) protein is Envelope glycoprotein N.